Here is a 262-residue protein sequence, read N- to C-terminus: Late embryogenesis abundant protein 31 (262 aa).

A Nuclear localization signal (NLS) motif is present at residues 6–10 (QPKRP). 3 SMP domains span residues 14–68 (VTYG…ANKR), 136–192 (ITIG…NHNA), and 201–260 (IKLI…NERA).

This sequence belongs to the LEA type SMP family. In terms of tissue distribution, embryo specific, only in dry mature seeds.

Its subcellular location is the nucleus. The protein localises to the nucleolus. The protein resides in the cytoplasm. Functionally, LEA proteins are late embryonic proteins abundant in higher plant seed embryos. The function of those proteins is not known. Promotes germination rate. Enhances cation toxicity (e.g. lithium ion) and osmotic stress (e.g. NaCl and sorbitol) tolerance during germination and in seedlings. The chain is Late embryogenesis abundant protein 31 from Arabidopsis thaliana (Mouse-ear cress).